Here is a 487-residue protein sequence, read N- to C-terminus: Selenium-binding protein 2 (487 aa).

N-acetylalanine is present on alanine 2. Residues cysteine 19 and cysteine 20 each contribute to the selenite site.

The protein belongs to the selenium-binding protein family. As to expression, mostly expressed in seedlings, leaves and stems, and, to a lower extent, in flowers and roots.

Its function is as follows. Required for the fusion of female gametophyte polar nuclei. In Arabidopsis thaliana (Mouse-ear cress), this protein is Selenium-binding protein 2 (SBP2).